The primary structure comprises 515 residues: Maturase K (515 aa).

It belongs to the intron maturase 2 family. MatK subfamily.

The protein resides in the plastid. It localises to the chloroplast. Functionally, usually encoded in the trnK tRNA gene intron. Probably assists in splicing its own and other chloroplast group II introns. The protein is Maturase K of Zingiber officinale (Ginger).